The primary structure comprises 465 residues: Glutamate--tRNA ligase (465 aa).

Residues 11–21 (PSPTGFIHLGN) carry the 'HIGH' region motif. A 'KMSKS' region motif is present at residues 243 to 247 (KMSKR). An ATP-binding site is contributed by Lys-246.

This sequence belongs to the class-I aminoacyl-tRNA synthetase family. Glutamate--tRNA ligase type 1 subfamily. As to quaternary structure, monomer.

The protein resides in the cytoplasm. The enzyme catalyses tRNA(Glu) + L-glutamate + ATP = L-glutamyl-tRNA(Glu) + AMP + diphosphate. Functionally, catalyzes the attachment of glutamate to tRNA(Glu) in a two-step reaction: glutamate is first activated by ATP to form Glu-AMP and then transferred to the acceptor end of tRNA(Glu). The protein is Glutamate--tRNA ligase of Cupriavidus metallidurans (strain ATCC 43123 / DSM 2839 / NBRC 102507 / CH34) (Ralstonia metallidurans).